The sequence spans 454 residues: Bifunctional protein GlmU (454 aa).

The interval 1–226 is pyrophosphorylase; the sequence is MALNVVILAA…AIEVEGANNR (226 aa). UDP-N-acetyl-alpha-D-glucosamine-binding positions include 8–11, Lys-22, Gln-73, 78–79, 100–102, Gly-137, Glu-151, Asn-166, and Asn-224; these read LAAG, GT, and YGD. Asp-102 provides a ligand contact to Mg(2+). Mg(2+) is bound at residue Asn-224. The linker stretch occupies residues 227-247; sequence VQLAQLERAYQARAAEKLMLE. The tract at residues 248 to 454 is N-acetyltransferase; it reads GANLRDPARI…GWTRPVKQKK (207 aa). Positions 330 and 348 each coordinate UDP-N-acetyl-alpha-D-glucosamine. His-360 functions as the Proton acceptor in the catalytic mechanism. Residues Tyr-363 and Asn-374 each coordinate UDP-N-acetyl-alpha-D-glucosamine. Residues Ala-377, 383 to 384, Ser-402, Ala-420, and Arg-437 contribute to the acetyl-CoA site; that span reads NY.

In the N-terminal section; belongs to the N-acetylglucosamine-1-phosphate uridyltransferase family. The protein in the C-terminal section; belongs to the transferase hexapeptide repeat family. Homotrimer. It depends on Mg(2+) as a cofactor.

Its subcellular location is the cytoplasm. It carries out the reaction alpha-D-glucosamine 1-phosphate + acetyl-CoA = N-acetyl-alpha-D-glucosamine 1-phosphate + CoA + H(+). The catalysed reaction is N-acetyl-alpha-D-glucosamine 1-phosphate + UTP + H(+) = UDP-N-acetyl-alpha-D-glucosamine + diphosphate. It participates in nucleotide-sugar biosynthesis; UDP-N-acetyl-alpha-D-glucosamine biosynthesis; N-acetyl-alpha-D-glucosamine 1-phosphate from alpha-D-glucosamine 6-phosphate (route II): step 2/2. The protein operates within nucleotide-sugar biosynthesis; UDP-N-acetyl-alpha-D-glucosamine biosynthesis; UDP-N-acetyl-alpha-D-glucosamine from N-acetyl-alpha-D-glucosamine 1-phosphate: step 1/1. It functions in the pathway bacterial outer membrane biogenesis; LPS lipid A biosynthesis. Functionally, catalyzes the last two sequential reactions in the de novo biosynthetic pathway for UDP-N-acetylglucosamine (UDP-GlcNAc). The C-terminal domain catalyzes the transfer of acetyl group from acetyl coenzyme A to glucosamine-1-phosphate (GlcN-1-P) to produce N-acetylglucosamine-1-phosphate (GlcNAc-1-P), which is converted into UDP-GlcNAc by the transfer of uridine 5-monophosphate (from uridine 5-triphosphate), a reaction catalyzed by the N-terminal domain. This is Bifunctional protein GlmU from Shewanella loihica (strain ATCC BAA-1088 / PV-4).